The primary structure comprises 446 residues: Citrate/sodium symporter (446 aa).

Helical transmembrane passes span 23–43, 46–66, 79–99, 110–130, and 148–168; these read IFGMPLPLYAFALITLLLSHF, AIPTDLVGGFALMFVMGAIFG, IGGAPVMIFLVAAYFVYAGIF, VMDKSNFLNLFIAVLITGAIL, and ILAGIVGASLFGIVIGLCFGI. Residues Ile181 and Gly183 each contribute to the Na(+) site. The citrate site is built by Asn186 and Gly187. Transmembrane regions (helical) follow at residues 213–233, 267–287, 289–309, 335–355, and 364–384; these read IAILTIANIFAIIFAALLDMI, ETAVGMVLSTTCFLLAYVVAK, ILPSIGGVSIHYFAWMVLIVA, QLLWVLMVGVGVCYTDLQEII, and VIAAIIVVGAVVGAAIGGWLI. Positions 399 and 401 each coordinate Na(+). Positions 402, 404, 405, and 428 each coordinate citrate. Residues 425–445 traverse the membrane as a helical segment; the sequence is ISSRLGGGIVLVIASIVFSMM.

This sequence belongs to the 2-hydroxycarboxylate transporter (2-HCT) (TC 2.A.24) family. As to quaternary structure, homodimer.

The protein localises to the cell inner membrane. The enzyme catalyses citrate(out) + 2 Na(+)(out) = citrate(in) + 2 Na(+)(in). Functionally, secondary active transporter that catalyzes the uptake of citrate across the membrane with the concomitant uptake of sodium. Is specific for citrate. In Salmonella dublin, this protein is Citrate/sodium symporter.